The primary structure comprises 241 residues: Small ribosomal subunit protein uS2 (241 aa).

This sequence belongs to the universal ribosomal protein uS2 family.

This Erwinia tasmaniensis (strain DSM 17950 / CFBP 7177 / CIP 109463 / NCPPB 4357 / Et1/99) protein is Small ribosomal subunit protein uS2.